The following is a 161-amino-acid chain: Protein translocase subunit SecE (161 aa).

A compositionally biased stretch (acidic residues) spans 1 to 12 (MSDEGDVADEAV). A disordered region spans residues 1–80 (MSDEGDVADE…GVAKDDSTTK (80 aa)). The helical transmembrane segment at 133 to 153 (VVLAFLAFMVALVAGADLGLT) threads the bilayer.

The protein belongs to the SecE/SEC61-gamma family. Component of the Sec protein translocase complex. Heterotrimer consisting of SecY, SecE and SecG subunits. The heterotrimers can form oligomers, although 1 heterotrimer is thought to be able to translocate proteins. Interacts with the ribosome. Interacts with SecDF, and other proteins may be involved. Interacts with SecA.

The protein resides in the cell membrane. Its function is as follows. Essential subunit of the Sec protein translocation channel SecYEG. Clamps together the 2 halves of SecY. May contact the channel plug during translocation. This chain is Protein translocase subunit SecE, found in Mycobacterium bovis (strain ATCC BAA-935 / AF2122/97).